We begin with the raw amino-acid sequence, 177 residues long: Ubiquinol-cytochrome c reductase iron-sulfur subunit (177 aa).

A helical membrane pass occupies residues 18-38; sequence MVLTASSVAAIGAVCTLWPLV. The Rieske domain occupies 88–175; that stretch reads ARAVKMSELI…YTFISDKKIR (88 aa). Cys120, His122, Cys139, and His142 together coordinate [2Fe-2S] cluster. Cys125 and Cys141 form a disulfide bridge.

It belongs to the Rieske iron-sulfur protein family. In terms of assembly, the main subunits of complex b-c1 are: cytochrome b, cytochrome c1 and the Rieske protein. [2Fe-2S] cluster serves as cofactor.

The protein resides in the cell membrane. The catalysed reaction is a quinol + 2 Fe(III)-[cytochrome c](out) = a quinone + 2 Fe(II)-[cytochrome c](out) + 2 H(+)(out). Functionally, component of the ubiquinol-cytochrome c reductase complex (complex III or cytochrome b-c1 complex), which is a respiratory chain that generates an electrochemical potential coupled to ATP synthesis. This is Ubiquinol-cytochrome c reductase iron-sulfur subunit (petA) from Rickettsia conorii (strain ATCC VR-613 / Malish 7).